A 152-amino-acid chain; its full sequence is Ribosome maturation factor RimP (152 aa).

This sequence belongs to the RimP family.

The protein localises to the cytoplasm. Functionally, required for maturation of 30S ribosomal subunits. This chain is Ribosome maturation factor RimP, found in Erwinia tasmaniensis (strain DSM 17950 / CFBP 7177 / CIP 109463 / NCPPB 4357 / Et1/99).